We begin with the raw amino-acid sequence, 317 residues long: Acetyl-coenzyme A carboxylase carboxyl transferase subunit alpha (317 aa).

Residues 43-293 (RVRESMADIY…GDVISNALGE (251 aa)) enclose the CoA carboxyltransferase C-terminal domain.

Belongs to the AccA family. Acetyl-CoA carboxylase is a heterohexamer composed of biotin carboxyl carrier protein (AccB), biotin carboxylase (AccC) and two subunits each of ACCase subunit alpha (AccA) and ACCase subunit beta (AccD).

Its subcellular location is the cytoplasm. The catalysed reaction is N(6)-carboxybiotinyl-L-lysyl-[protein] + acetyl-CoA = N(6)-biotinyl-L-lysyl-[protein] + malonyl-CoA. It functions in the pathway lipid metabolism; malonyl-CoA biosynthesis; malonyl-CoA from acetyl-CoA: step 1/1. Component of the acetyl coenzyme A carboxylase (ACC) complex. First, biotin carboxylase catalyzes the carboxylation of biotin on its carrier protein (BCCP) and then the CO(2) group is transferred by the carboxyltransferase to acetyl-CoA to form malonyl-CoA. The protein is Acetyl-coenzyme A carboxylase carboxyl transferase subunit alpha of Rhizobium rhizogenes (strain K84 / ATCC BAA-868) (Agrobacterium radiobacter).